The following is a 486-amino-acid chain: Ribulose bisphosphate carboxylase large chain, chromosomal (486 aa).

Residues Asn-126 and Thr-176 each contribute to the substrate site. The active-site Proton acceptor is Lys-178. Lys-180 serves as a coordination point for substrate. Mg(2+)-binding residues include Lys-204, Asp-206, and Glu-207. Lys-204 is modified (N6-carboxylysine). His-296 serves as the catalytic Proton acceptor. Substrate contacts are provided by Arg-297, His-329, and Ser-381.

The protein belongs to the RuBisCO large chain family. Type I subfamily. As to quaternary structure, heterohexadecamer of 8 large chains and 8 small chains; disulfide-linked. The disulfide link is formed within the large subunit homodimers. Requires Mg(2+) as cofactor. In terms of processing, the disulfide bond which can form between Cys-278 in the large chain dimeric partners within the hexadecamer appears to be associated with oxidative stress and protein turnover.

It carries out the reaction 2 (2R)-3-phosphoglycerate + 2 H(+) = D-ribulose 1,5-bisphosphate + CO2 + H2O. The enzyme catalyses D-ribulose 1,5-bisphosphate + O2 = 2-phosphoglycolate + (2R)-3-phosphoglycerate + 2 H(+). Its function is as follows. RuBisCO catalyzes two reactions: the carboxylation of D-ribulose 1,5-bisphosphate, the primary event in carbon dioxide fixation, as well as the oxidative fragmentation of the pentose substrate. Both reactions occur simultaneously and in competition at the same active site. The chain is Ribulose bisphosphate carboxylase large chain, chromosomal (cbbL1) from Cupriavidus necator (strain ATCC 17699 / DSM 428 / KCTC 22496 / NCIMB 10442 / H16 / Stanier 337) (Ralstonia eutropha).